The primary structure comprises 853 residues: Protein translocase subunit SecA 1 (853 aa).

ATP-binding positions include Gln-85, 103-107 (GEGKT), and Asp-492.

This sequence belongs to the SecA family. In terms of assembly, monomer and homodimer. Part of the essential Sec protein translocation apparatus which comprises SecA, SecYEG and auxiliary proteins SecDF. Other proteins may also be involved.

The protein localises to the cell membrane. It localises to the cytoplasm. The enzyme catalyses ATP + H2O + cellular proteinSide 1 = ADP + phosphate + cellular proteinSide 2.. Functionally, part of the Sec protein translocase complex. Interacts with the SecYEG preprotein conducting channel. Has a central role in coupling the hydrolysis of ATP to the transfer of proteins into and across the cell membrane, serving as an ATP-driven molecular motor driving the stepwise translocation of polypeptide chains across the membrane. In Corynebacterium diphtheriae (strain ATCC 700971 / NCTC 13129 / Biotype gravis), this protein is Protein translocase subunit SecA 1.